The sequence spans 264 residues: Thymidylate synthase (264 aa).

Arginine 21 is a binding site for dUMP. Residue histidine 51 coordinates (6R)-5,10-methylene-5,6,7,8-tetrahydrofolate. DUMP is bound at residue 126–127; that stretch reads RR. Cysteine 146 (nucleophile) is an active-site residue. Residues 166–169, asparagine 177, and 207–209 each bind dUMP; these read RSCD and HLY. Aspartate 169 contacts (6R)-5,10-methylene-5,6,7,8-tetrahydrofolate. Alanine 263 is a binding site for (6R)-5,10-methylene-5,6,7,8-tetrahydrofolate.

It belongs to the thymidylate synthase family. Bacterial-type ThyA subfamily. As to quaternary structure, homodimer.

The protein localises to the cytoplasm. It catalyses the reaction dUMP + (6R)-5,10-methylene-5,6,7,8-tetrahydrofolate = 7,8-dihydrofolate + dTMP. The protein operates within pyrimidine metabolism; dTTP biosynthesis. Its function is as follows. Catalyzes the reductive methylation of 2'-deoxyuridine-5'-monophosphate (dUMP) to 2'-deoxythymidine-5'-monophosphate (dTMP) while utilizing 5,10-methylenetetrahydrofolate (mTHF) as the methyl donor and reductant in the reaction, yielding dihydrofolate (DHF) as a by-product. This enzymatic reaction provides an intracellular de novo source of dTMP, an essential precursor for DNA biosynthesis. The sequence is that of Thymidylate synthase from Shigella boydii serotype 4 (strain Sb227).